A 466-amino-acid polypeptide reads, in one-letter code: Glutamate--tRNA ligase (466 aa).

Positions 10-20 (PSPTGYLHIGG) match the 'HIGH' region motif. Positions 237–241 (RLSKR) match the 'KMSKS' region motif. K240 serves as a coordination point for ATP.

This sequence belongs to the class-I aminoacyl-tRNA synthetase family. Glutamate--tRNA ligase type 1 subfamily. Monomer.

It is found in the cytoplasm. The enzyme catalyses tRNA(Glu) + L-glutamate + ATP = L-glutamyl-tRNA(Glu) + AMP + diphosphate. Catalyzes the attachment of glutamate to tRNA(Glu) in a two-step reaction: glutamate is first activated by ATP to form Glu-AMP and then transferred to the acceptor end of tRNA(Glu). In Syntrophotalea carbinolica (strain DSM 2380 / NBRC 103641 / GraBd1) (Pelobacter carbinolicus), this protein is Glutamate--tRNA ligase.